Here is a 403-residue protein sequence, read N- to C-terminus: High affinity transport system protein p37 (403 aa).

The first 23 residues, 1 to 23 (MLKKLKNFILFSSIFSPIAFAIS), serve as a signal peptide directing secretion. A lipid anchor (N-palmitoyl cysteine) is attached at Cys-24. Cys-24 carries S-diacylglycerol cysteine lipidation.

Its subcellular location is the cell membrane. P37 is part of a high-affinity transport system. The sequence is that of High affinity transport system protein p37 (p37) from Mesomycoplasma hyorhinis (Mycoplasma hyorhinis).